A 1365-amino-acid chain; its full sequence is DNA-directed RNA polymerase subunit beta' (1365 aa).

The Zn(2+) site is built by C249, C316, C323, and C326.

Belongs to the RNA polymerase beta' chain family. RpoC2 subfamily. As to quaternary structure, in cyanobacteria the RNAP catalytic core is composed of 2 alpha, 1 beta, 1 beta', 1 gamma and 1 omega subunit. When a sigma factor is associated with the core the holoenzyme is formed, which can initiate transcription. Zn(2+) is required as a cofactor.

It catalyses the reaction RNA(n) + a ribonucleoside 5'-triphosphate = RNA(n+1) + diphosphate. DNA-dependent RNA polymerase catalyzes the transcription of DNA into RNA using the four ribonucleoside triphosphates as substrates. This chain is DNA-directed RNA polymerase subunit beta', found in Synechococcus sp. (strain CC9311).